The following is a 207-amino-acid chain: LexA repressor (207 aa).

The H-T-H motif DNA-binding region spans Arg-28–Lys-48. Residues Ser-123 and Lys-160 each act as for autocatalytic cleavage activity in the active site.

Belongs to the peptidase S24 family. Homodimer.

The enzyme catalyses Hydrolysis of Ala-|-Gly bond in repressor LexA.. Its function is as follows. Represses a number of genes involved in the response to DNA damage (SOS response), including recA and lexA. In the presence of single-stranded DNA, RecA interacts with LexA causing an autocatalytic cleavage which disrupts the DNA-binding part of LexA, leading to derepression of the SOS regulon and eventually DNA repair. In Haemophilus influenzae (strain 86-028NP), this protein is LexA repressor.